The sequence spans 270 residues: Tetraspanin-17 (270 aa).

At 1-19 (MPGKHQQFQDPEVGCCGKY) the chain is on the cytoplasmic side. The chain crosses the membrane as a helical span at residues 20 to 40 (FLFGFNIVFWVLGALFLAIGL). Topologically, residues 41 to 63 (WAWGEKGVLSNISGLTDLGGLDP) are extracellular. Residue Asn51 is glycosylated (N-linked (GlcNAc...) asparagine). The helical transmembrane segment at 64 to 84 (VWLFVVIGGIMSVLGFAGCIG) threads the bilayer. The Cytoplasmic portion of the chain corresponds to 85-94 (ALRENTFLLK). The chain crosses the membrane as a helical span at residues 95–115 (FFSVFLGLIFFLELAAGILAF). At 116 to 234 (VFKDWIRDQL…GQFEKWLQDN (119 aa)) the chain is on the extracellular side. 4 disulfides stabilise this stretch: Cys155–Cys223, Cys156–Cys188, Cys172–Cys182, and Cys189–Cys202. Residue Asn171 is glycosylated (N-linked (GlcNAc...) asparagine). A helical membrane pass occupies residues 235–255 (LIVVAGVLVAIALLQICGICL). Over 256–270 (AQNLVSDIEAVKANW) the chain is Cytoplasmic.

The protein belongs to the tetraspanin (TM4SF) family. In terms of assembly, interacts with ADAM10; the interaction influences ADAM10 substrate specificity, endocytosis and turnover.

It localises to the cell membrane. Functionally, part of TspanC8 subgroup, composed of 6 members that interact with the transmembrane metalloprotease ADAM10. This interaction is required for ADAM10 exit from the endoplasmic reticulum and for enzymatic maturation and trafficking to the cell surface as well as substrate specificity. Different TspanC8/ADAM10 complexes have distinct substrates. Seems to regulate VE-cadherin expression in endothelial cells probably through interaction with ADAM10, promoting leukocyte transmigration. The protein is Tetraspanin-17 (Tspan17) of Rattus norvegicus (Rat).